Reading from the N-terminus, the 118-residue chain is Heavy metal-associated isoprenylated plant protein 12 (118 aa).

One can recognise an HMA domain in the interval 1-65 (MQVVVLKLDV…KICHTEFISV (65 aa)). A disordered region spans residues 68 to 87 (VKEPEKKKPDDPKKPETKPP). The segment covering 69–86 (KEPEKKKPDDPKKPETKP) has biased composition (basic and acidic residues). The residue at position 115 (cysteine 115) is a Cysteine methyl ester. Cysteine 115 carries S-farnesyl cysteine lipidation. The propeptide at 116–118 (VTS) is removed in mature form.

It belongs to the HIPP family.

Its function is as follows. Probable heavy-metal-binding protein. The protein is Heavy metal-associated isoprenylated plant protein 12 of Arabidopsis thaliana (Mouse-ear cress).